Reading from the N-terminus, the 456-residue chain is uncharacterized protein (456 aa).

Residues 2-60 form the TRAM domain; that stretch reads AMRKGKEYELNIEEIEFPSMGIAYHEGLKVYVKHGIPGQKVLARITTKKKDHAKGKIIE. Positions 73, 79, 82, and 162 each coordinate [4Fe-4S] cluster. Residues Q288, Y317, E338, and D383 each contribute to the S-adenosyl-L-methionine site. C410 (nucleophile) is an active-site residue.

Belongs to the class I-like SAM-binding methyltransferase superfamily. RNA M5U methyltransferase family.

This is an uncharacterized protein from Clostridium tetani (strain Massachusetts / E88).